We begin with the raw amino-acid sequence, 1627 residues long: Pappalysin-1 (1627 aa).

A signal peptide spans 1 to 22 (MRLWSWVLHLGLLSAALGCGLA). Positions 23-81 (ERPRRARRDPRAGRPPRPAAGPATCATRAARGRRASPPPPPPPGGAWEAVRVPRRRQQR) are excised as a propeptide. The segment at 23–99 (ERPRRARRDP…PSPPSRALYF (77 aa)) is disordered. Residues 42–51 (AGPATCATRA) are compositionally biased toward low complexity. 17 cysteine pairs are disulfide-bonded: C144–C235, C327–C622, C332–C657, C414–C428, C424–C440, C457–C473, C474–C485, C583–C600, C587–C612, C710–C878, C713–C881, C753–C835, C775–C781, C947–C975, C960–C971, C983–C990, and C999–C1011. A metalloprotease region spans residues 272–583 (METHGAHTAL…FRGISEIQSC (312 aa)). N-linked (GlcNAc...) asparagine glycosylation is found at N390 and N402. N-linked (GlcNAc...) asparagine glycosylation is present at N429. Residue N480 is glycosylated (N-linked (GlcNAc...) asparagine). H562 is a Zn(2+) binding site. Residue E563 is part of the active site. Zn(2+) is bound by residues H566 and H572. N-linked (GlcNAc...) asparagine glycans are attached at residues N601, N619, and N725. The disordered stretch occupies residues 733 to 754 (SPSGHWSPREAEGHPDVEQPCK). Residues 739–751 (SPREAEGHPDVEQ) are compositionally biased toward basic and acidic residues. N-linked (GlcNAc...) asparagine glycosylation occurs at N825. N-linked (GlcNAc...) asparagine glycosylation is present at N1026. 19 disulfide bridges follow: C1036–C1070, C1051–C1139, C1192–C1205, C1215–C1269, C1227–C1238, C1242–C1280, C1285–C1329, C1300–C1310, C1314–C1342, C1346–C1399, C1362–C1373, C1377–C1410, C1415–C1458, C1428–C1438, C1442–C1471, C1478–C1539, C1492–C1502, C1506–C1554, and C1558–C1576. 5 Sushi domains span residues 1213 to 1282 (TDCP…ACEP), 1283 to 1344 (VDCS…LCEL), 1345 to 1412 (MCLA…ACVP), 1413 to 1473 (VTCD…VCQE), and 1476 to 1556 (GQCS…HCVK). Residues N1222 and N1226 are each glycosylated (N-linked (GlcNAc...) asparagine). A glycan (N-linked (GlcNAc...) asparagine) is linked at N1323. N-linked (GlcNAc...) asparagine glycosylation is present at N1465. N-linked (GlcNAc...) asparagine glycosylation is present at N1519.

The protein belongs to the peptidase M43B family. As to quaternary structure, homodimer; disulfide-linked. In pregnancy serum, predominantly found as a disulfide-linked 2:2 heterotetramer with the proform of PRG2. Requires Zn(2+) as cofactor. In terms of processing, there appear to be no free sulfhydryl groups. In terms of tissue distribution, high levels in placenta and pregnancy serum. In placenta, expressed in X cells in septa and anchoring villi, and in syncytiotrophoblasts in the chorionic villi. Lower levels are found in a variety of other tissues including kidney, myometrium, endometrium, ovaries, breast, prostate, bone marrow, colon, fibroblasts and osteoblasts.

It is found in the secreted. It carries out the reaction Cleavage of the 135-Met-|-Lys-136 bond in insulin-like growth factor binding protein (IGFBP)-4, and the 143-Ser-|-Lys-144 bond in IGFBP-5.. Inhibited by complexation with the proform of PRG2. Functionally, metalloproteinase which specifically cleaves IGFBP-4 and IGFBP-5, resulting in release of bound IGF. Cleavage of IGFBP-4 is dramatically enhanced by the presence of IGF, whereas cleavage of IGFBP-5 is slightly inhibited by the presence of IGF. This Homo sapiens (Human) protein is Pappalysin-1 (PAPPA).